The primary structure comprises 914 residues: Polyribonucleotide nucleotidyltransferase (914 aa).

A disordered region spans residues 407–427; the sequence is YMHNYEMPPYSTGETGRVGSP. 2 residues coordinate Mg(2+): Asp-521 and Asp-527. The KH domain occupies 587–646; that stretch reads PRIITTSVPVEKIGEVIGPKGKMINQIQEDTGAEIAIEDDGTVFISSEGGEAAKKAKSII. The S1 motif domain occupies 658–730; sequence GETYNGKVVK…DRGKISLAIP (73 aa). The tract at residues 727–914 is disordered; it reads LAIPGFEDQE…VRRDFDPFED (188 aa). Composition is skewed to basic and acidic residues over residues 742–789, 797–865, and 873–899; these read SRGD…RRSD, DRPR…DRRG, and RGSD…ERTE.

Belongs to the polyribonucleotide nucleotidyltransferase family. Mg(2+) is required as a cofactor.

It localises to the cytoplasm. The catalysed reaction is RNA(n+1) + phosphate = RNA(n) + a ribonucleoside 5'-diphosphate. Functionally, involved in mRNA degradation. Catalyzes the phosphorolysis of single-stranded polyribonucleotides processively in the 3'- to 5'-direction. The chain is Polyribonucleotide nucleotidyltransferase from Bifidobacterium longum subsp. infantis (strain ATCC 15697 / DSM 20088 / JCM 1222 / NCTC 11817 / S12).